Consider the following 620-residue polypeptide: Somatic embryogenesis receptor kinase 4 (620 aa).

The N-terminal stretch at 1-33 (MTSSKMEQRSLLCFLYLLLLFNFTLRVAGNAEG) is a signal peptide. The Extracellular segment spans residues 34 to 234 (DALTQLKNSL…GGQMTAAIAG (201 aa)). LRR repeat units lie at residues 100 to 122 (NLQY…LGDL), 124 to 146 (ELVS…LGKL), 148 to 170 (KLRF…LTSV), 171 to 193 (QLQV…GSFS), and 194 to 215 (LFTP…PPTS). An N-linked (GlcNAc...) asparagine glycan is attached at N110. N156, N189, and N202 each carry an N-linked (GlcNAc...) asparagine glycan. A disordered region spans residues 205 to 227 (LTDLPEPPPTSTSPTPPPPSGGQ). A compositionally biased stretch (pro residues) spans 209 to 224 (PEPPPTSTSPTPPPPS). The helical transmembrane segment at 235 to 255 (GVAAGAALLFAVPAIAFAWWL) threads the bilayer. The Cytoplasmic portion of the chain corresponds to 256-620 (RRKPQDHFFD…IENDYPSGPR (365 aa)). Position 291 is a phosphothreonine (T291). Positions 294–591 (FSNKNVLGRG…KEEMPIHDFN (298 aa)) constitute a Protein kinase domain. S295 bears the Phosphoserine mark. ATP is bound by residues 300-308 (LGRGGFGKV) and K322. A phosphoserine mark is found at S375 and S378. Residue D421 is the Proton acceptor of the active site. Phosphothreonine occurs at positions 454, 455, and 460. Y468 carries the phosphotyrosine modification. S470 carries the phosphoserine modification. The residue at position 471 (T471) is a Phosphothreonine. Phosphoserine is present on S475. T551 carries the phosphothreonine modification.

The protein belongs to the protein kinase superfamily. Ser/Thr protein kinase family. In terms of assembly, interacts with the EF-Tu receptor EFR and FLS2 in a specific ligand-induced manner. Interacts with TMK4/BARK1. Interacts with ERECTA in a EPF2-induced manner. Interacts with ERL1 in a EPF1-induced manner. Interacts with TMM. Forms a complex with MIK2 in response to SCOOP12 perception. Post-translationally, autophosphorylated on Thr and Tyr residues.

It is found in the cell membrane. The catalysed reaction is L-seryl-[protein] + ATP = O-phospho-L-seryl-[protein] + ADP + H(+). The enzyme catalyses L-threonyl-[protein] + ATP = O-phospho-L-threonyl-[protein] + ADP + H(+). It carries out the reaction L-tyrosyl-[protein] + ATP = O-phospho-L-tyrosyl-[protein] + ADP + H(+). In terms of biological role, dual specificity kinase acting on both serine/threonine- and tyrosine-containing substrates. Positively regulates the BR-dependent plant growth pathway and negatively regulates the BR-independent cell-death pathway. Required during SCOOP small peptides (e.g. SCOOP10 and SCOOP12) perception and signaling; associates with MIK2 as a coreceptor upon MIK2 perception of SCOOP peptides, and relays the signaling through the activation of receptor-like cytosolic kinases (RLCKs) BIK1 and PBL1. This chain is Somatic embryogenesis receptor kinase 4, found in Arabidopsis thaliana (Mouse-ear cress).